Consider the following 207-residue polypeptide: MAAVDVLNRSGEKVSEAFLADEVFSIPVKKSVLHDVVRMQLARRRSGTAKSKGRSEVSGSTRKLYRQKGTGNARSGSVKSPLRRGGGVIFGPAPRSYAYAIPKKVRALALKMALSSKLAANELSVIDTFAMDSIKTKEFDSIIDHLGLKNTLIVIDGDDRNLVLSARNIPDVKVIRTEGLNVYDILKYDNLLLIESAIKEIEGRFTR.

The disordered stretch occupies residues 43–80; it reads RRRSGTAKSKGRSEVSGSTRKLYRQKGTGNARSGSVKS. The span at 69-78 shows a compositional bias: polar residues; it reads GTGNARSGSV.

This sequence belongs to the universal ribosomal protein uL4 family. In terms of assembly, part of the 50S ribosomal subunit.

One of the primary rRNA binding proteins, this protein initially binds near the 5'-end of the 23S rRNA. It is important during the early stages of 50S assembly. It makes multiple contacts with different domains of the 23S rRNA in the assembled 50S subunit and ribosome. Functionally, forms part of the polypeptide exit tunnel. The protein is Large ribosomal subunit protein uL4 of Desulforapulum autotrophicum (strain ATCC 43914 / DSM 3382 / VKM B-1955 / HRM2) (Desulfobacterium autotrophicum).